The chain runs to 448 residues: Tryptophan dimethylallyltransferase 2 (448 aa).

L-tryptophan is bound by residues 80–81 (IL) and Glu89. Substrate-binding residues include Arg100, Lys186, and Tyr188. Tyr190 and Arg249 together coordinate L-tryptophan. Substrate contacts are provided by Arg262, Lys264, Tyr266, Gln348, Tyr350, Tyr414, and Tyr418.

It belongs to the tryptophan dimethylallyltransferase family. In terms of assembly, homodimer.

It catalyses the reaction L-tryptophan + dimethylallyl diphosphate = 4-(3-methylbut-2-enyl)-L-tryptophan + diphosphate. The protein operates within alkaloid biosynthesis; ergot alkaloid biosynthesis. Its function is as follows. Catalyzes the first step of ergot alkaloid biosynthesis. Ergot alkaloids, which are produced by endophyte fungi, can enhance plant host fitness, but also cause livestock toxicosis to host plants. In Claviceps purpurea (strain 20.1) (Ergot fungus), this protein is Tryptophan dimethylallyltransferase 2 (dmaW2).